Reading from the N-terminus, the 531-residue chain is CTP synthase (531 aa).

Residues 1–264 are amidoligase domain; sequence MPKFVVVTGG…GDFLVERLRL (264 aa). Ser-13 contributes to the CTP binding site. Ser-13 contacts UTP. ATP is bound at residue 14-19; the sequence is GLGKGV. Tyr-54 contributes to the L-glutamine binding site. Asp-71 serves as a coordination point for ATP. Mg(2+) contacts are provided by Asp-71 and Glu-139. Residues 146 to 148, 185 to 190, and Lys-221 each bind CTP; these read DYE and KTKPLQ. Residues 185–190 and Lys-221 each bind UTP; that span reads KTKPLQ. Residues 293–531 form the Glutamine amidotransferase type-1 domain; the sequence is CGKYVELPDA…LSAAVEQSRR (239 aa). Gly-351 provides a ligand contact to L-glutamine. Catalysis depends on Cys-378, which acts as the Nucleophile; for glutamine hydrolysis. L-glutamine-binding positions include 379–382, Glu-402, and Arg-459; that span reads FGMQ. Catalysis depends on residues His-504 and Glu-506.

This sequence belongs to the CTP synthase family. Homotetramer.

The catalysed reaction is UTP + L-glutamine + ATP + H2O = CTP + L-glutamate + ADP + phosphate + 2 H(+). It catalyses the reaction L-glutamine + H2O = L-glutamate + NH4(+). The enzyme catalyses UTP + NH4(+) + ATP = CTP + ADP + phosphate + 2 H(+). Its pathway is pyrimidine metabolism; CTP biosynthesis via de novo pathway; CTP from UDP: step 2/2. With respect to regulation, allosterically activated by GTP, when glutamine is the substrate; GTP has no effect on the reaction when ammonia is the substrate. The allosteric effector GTP functions by stabilizing the protein conformation that binds the tetrahedral intermediate(s) formed during glutamine hydrolysis. Inhibited by the product CTP, via allosteric rather than competitive inhibition. In terms of biological role, catalyzes the ATP-dependent amination of UTP to CTP with either L-glutamine or ammonia as the source of nitrogen. Regulates intracellular CTP levels through interactions with the four ribonucleotide triphosphates. The polypeptide is CTP synthase (Pyrobaculum calidifontis (strain DSM 21063 / JCM 11548 / VA1)).